The sequence spans 98 residues: U-scoloptoxin(16)-Er9a (98 aa).

An N-terminal signal peptide occupies residues 1–24 (MVSYLCMSVSSGWLSIGKIAIKDG).

This sequence belongs to the scoloptoxin-16 family. Post-translationally, contains 4 disulfide bonds. Expressed by the venom gland.

Its subcellular location is the secreted. This is U-scoloptoxin(16)-Er9a from Ethmostigmus rubripes (Giant centipede).